The chain runs to 207 residues: Large ribosomal subunit protein uL4 (207 aa).

Positions 56–75 are disordered; it reads EVSGTTKKPFKQKGTGNARQ.

Belongs to the universal ribosomal protein uL4 family. Part of the 50S ribosomal subunit.

In terms of biological role, one of the primary rRNA binding proteins, this protein initially binds near the 5'-end of the 23S rRNA. It is important during the early stages of 50S assembly. It makes multiple contacts with different domains of the 23S rRNA in the assembled 50S subunit and ribosome. Its function is as follows. Forms part of the polypeptide exit tunnel. In Rickettsia prowazekii (strain Madrid E), this protein is Large ribosomal subunit protein uL4.